A 123-amino-acid polypeptide reads, in one-letter code: Large ribosomal subunit protein bL12 (123 aa).

This sequence belongs to the bacterial ribosomal protein bL12 family. As to quaternary structure, homodimer. Part of the ribosomal stalk of the 50S ribosomal subunit. Forms a multimeric L10(L12)X complex, where L10 forms an elongated spine to which 2 to 4 L12 dimers bind in a sequential fashion. Binds GTP-bound translation factors.

Its function is as follows. Forms part of the ribosomal stalk which helps the ribosome interact with GTP-bound translation factors. Is thus essential for accurate translation. The sequence is that of Large ribosomal subunit protein bL12 from Bacillus licheniformis (strain ATCC 14580 / DSM 13 / JCM 2505 / CCUG 7422 / NBRC 12200 / NCIMB 9375 / NCTC 10341 / NRRL NRS-1264 / Gibson 46).